The following is a 275-amino-acid chain: Large ribosomal subunit protein uL2 (275 aa).

The segment at 223 to 275 (GVVMNPVDHPHGGGEGRGKGHHPQSPWGVPAKGYKTRRGKRASDKFIVRRRNG) is disordered. Positions 230-240 (DHPHGGGEGRG) are enriched in basic and acidic residues.

This sequence belongs to the universal ribosomal protein uL2 family. In terms of assembly, part of the 50S ribosomal subunit. Forms a bridge to the 30S subunit in the 70S ribosome.

Its function is as follows. One of the primary rRNA binding proteins. Required for association of the 30S and 50S subunits to form the 70S ribosome, for tRNA binding and peptide bond formation. It has been suggested to have peptidyltransferase activity; this is somewhat controversial. Makes several contacts with the 16S rRNA in the 70S ribosome. This Fervidobacterium nodosum (strain ATCC 35602 / DSM 5306 / Rt17-B1) protein is Large ribosomal subunit protein uL2.